The following is a 381-amino-acid chain: 1-deoxy-D-xylulose 5-phosphate reductoisomerase (381 aa).

NADPH-binding residues include T10, G11, S12, I13, G36, K37, N38, and N122. K123 contributes to the 1-deoxy-D-xylulose 5-phosphate binding site. E124 provides a ligand contact to NADPH. A Mn(2+)-binding site is contributed by D148. Residues S149, E150, S173, and H196 each contribute to the 1-deoxy-D-xylulose 5-phosphate site. Residue E150 participates in Mn(2+) binding. NADPH is bound at residue G202. 4 residues coordinate 1-deoxy-D-xylulose 5-phosphate: S209, N214, K215, and E218. E218 is a Mn(2+) binding site.

The protein belongs to the DXR family. It depends on Mg(2+) as a cofactor. Requires Mn(2+) as cofactor.

It catalyses the reaction 2-C-methyl-D-erythritol 4-phosphate + NADP(+) = 1-deoxy-D-xylulose 5-phosphate + NADPH + H(+). It functions in the pathway isoprenoid biosynthesis; isopentenyl diphosphate biosynthesis via DXP pathway; isopentenyl diphosphate from 1-deoxy-D-xylulose 5-phosphate: step 1/6. Its function is as follows. Catalyzes the NADPH-dependent rearrangement and reduction of 1-deoxy-D-xylulose-5-phosphate (DXP) to 2-C-methyl-D-erythritol 4-phosphate (MEP). In Desulfitobacterium hafniense (strain Y51), this protein is 1-deoxy-D-xylulose 5-phosphate reductoisomerase.